A 222-amino-acid chain; its full sequence is Large ribosomal subunit protein uL1 (222 aa).

Belongs to the universal ribosomal protein uL1 family. In terms of assembly, part of the 50S ribosomal subunit.

Its function is as follows. Binds directly to 23S rRNA. Probably involved in E site tRNA release. Functionally, protein L1 is also a translational repressor protein, it controls the translation of its operon by binding to its mRNA. The chain is Large ribosomal subunit protein uL1 from Pyrobaculum arsenaticum (strain DSM 13514 / JCM 11321 / PZ6).